The sequence spans 250 residues: Acetylglutamate kinase (250 aa).

Substrate contacts are provided by residues Gly-41 to Gly-42, Arg-63, and Asn-156.

Belongs to the acetylglutamate kinase family. ArgB subfamily.

Its subcellular location is the cytoplasm. The enzyme catalyses N-acetyl-L-glutamate + ATP = N-acetyl-L-glutamyl 5-phosphate + ADP. It participates in amino-acid biosynthesis; L-arginine biosynthesis; N(2)-acetyl-L-ornithine from L-glutamate: step 2/4. Catalyzes the ATP-dependent phosphorylation of N-acetyl-L-glutamate. The protein is Acetylglutamate kinase of Listeria monocytogenes serovar 1/2a (strain ATCC BAA-679 / EGD-e).